The primary structure comprises 288 residues: Elongation factor Ts (288 aa).

The segment at 82–85 (TDFV) is involved in Mg(2+) ion dislocation from EF-Tu.

The protein belongs to the EF-Ts family.

It is found in the cytoplasm. Its function is as follows. Associates with the EF-Tu.GDP complex and induces the exchange of GDP to GTP. It remains bound to the aminoacyl-tRNA.EF-Tu.GTP complex up to the GTP hydrolysis stage on the ribosome. In Pelodictyon phaeoclathratiforme (strain DSM 5477 / BU-1), this protein is Elongation factor Ts.